A 231-amino-acid polypeptide reads, in one-letter code: Ribose-5-phosphate isomerase A (231 aa).

Substrate is bound by residues 28-31, 83-86, and 96-99; these read TGST, DGAD, and KGGG. The Proton acceptor role is filled by glutamate 105. Lysine 123 serves as a coordination point for substrate.

The protein belongs to the ribose 5-phosphate isomerase family. As to quaternary structure, homodimer.

It carries out the reaction aldehydo-D-ribose 5-phosphate = D-ribulose 5-phosphate. The protein operates within carbohydrate degradation; pentose phosphate pathway; D-ribose 5-phosphate from D-ribulose 5-phosphate (non-oxidative stage): step 1/1. Its function is as follows. Catalyzes the reversible conversion of ribose-5-phosphate to ribulose 5-phosphate. This Rhizobium meliloti (strain 1021) (Ensifer meliloti) protein is Ribose-5-phosphate isomerase A.